A 125-amino-acid polypeptide reads, in one-letter code: Large ribosomal subunit protein bL12 (125 aa).

The protein belongs to the bacterial ribosomal protein bL12 family. Homodimer. Part of the ribosomal stalk of the 50S ribosomal subunit. Forms a multimeric L10(L12)X complex, where L10 forms an elongated spine to which 2 to 4 L12 dimers bind in a sequential fashion. Binds GTP-bound translation factors.

In terms of biological role, forms part of the ribosomal stalk which helps the ribosome interact with GTP-bound translation factors. Is thus essential for accurate translation. The polypeptide is Large ribosomal subunit protein bL12 (Rhizobium johnstonii (strain DSM 114642 / LMG 32736 / 3841) (Rhizobium leguminosarum bv. viciae)).